The chain runs to 556 residues: Insulin-like growth factor 2 mRNA-binding protein 2 (556 aa).

2 RRM domains span residues 3–76 and 82–157; these read NKLY…YSVS and RKIQ…YIPD. The residue at position 11 (Ser11) is a Phosphoserine. Positions 156-188 are disordered; the sequence is PDEEVSSPSPPQRAQRGDHSSREQGHAPGGTSQ. Phosphoserine occurs at positions 162 and 164. Residues 170–180 show a composition bias toward basic and acidic residues; it reads QRGDHSSREQG. 4 consecutive KH domains span residues 193–258, 274–341, 384–449, and 466–532; these read DFPL…CRMI, EIPL…EIEI, QEIV…QGRI, and KLEA…QRKI. Position 507 is a phosphothreonine (Thr507).

Belongs to the RRM IMP/VICKZ family. As to quaternary structure, can form homooligomers and heterooligomers with IGF2BP1 and IGF2BP3 in an RNA-dependent manner. Interacts with HNRPD. Interacts with IGF2BP1. Interacts with ELAVL1, DHX9, HNRNPU, MATR3 and PABPC1.

It localises to the nucleus. The protein localises to the cytoplasm. Its subcellular location is the P-body. It is found in the stress granule. Its function is as follows. RNA-binding factor that recruits target transcripts to cytoplasmic protein-RNA complexes (mRNPs). This transcript 'caging' into mRNPs allows mRNA transport and transient storage. It also modulates the rate and location at which target transcripts encounter the translational apparatus and shields them from endonuclease attacks or microRNA-mediated degradation. Preferentially binds to N6-methyladenosine (m6A)-containing mRNAs and increases their stability. Binds to the 5'-UTR of the insulin-like growth factor 2 (IGF2) mRNAs. Binding is isoform-specific. Binds to beta-actin/ACTB and MYC transcripts. Increases MYC mRNA stability by binding to the coding region instability determinant (CRD) and binding is enhanced by m6A-modification of the CRD. The polypeptide is Insulin-like growth factor 2 mRNA-binding protein 2 (IGF2BP2) (Pongo abelii (Sumatran orangutan)).